The chain runs to 408 residues: LL-diaminopimelate aminotransferase (408 aa).

Residues Y15 and G42 each coordinate substrate. Pyridoxal 5'-phosphate-binding positions include Y72, 108-109, Y132, N187, Y218, and 246-248; these read SK and SFS. K109, Y132, and N187 together coordinate substrate. An N6-(pyridoxal phosphate)lysine modification is found at K249. Residues R257 and N292 each coordinate pyridoxal 5'-phosphate. Positions 292 and 388 each coordinate substrate.

Belongs to the class-I pyridoxal-phosphate-dependent aminotransferase family. LL-diaminopimelate aminotransferase subfamily. Homodimer. The cofactor is pyridoxal 5'-phosphate.

It carries out the reaction (2S,6S)-2,6-diaminopimelate + 2-oxoglutarate = (S)-2,3,4,5-tetrahydrodipicolinate + L-glutamate + H2O + H(+). It participates in amino-acid biosynthesis; L-lysine biosynthesis via DAP pathway; LL-2,6-diaminopimelate from (S)-tetrahydrodipicolinate (aminotransferase route): step 1/1. In terms of biological role, involved in the synthesis of meso-diaminopimelate (m-DAP or DL-DAP), required for both lysine and peptidoglycan biosynthesis. Catalyzes the direct conversion of tetrahydrodipicolinate to LL-diaminopimelate. The protein is LL-diaminopimelate aminotransferase of Synechococcus sp. (strain WH7803).